The chain runs to 260 residues: Trans-aconitate 2-methyltransferase (260 aa).

Belongs to the methyltransferase superfamily. Tam family.

It is found in the cytoplasm. It catalyses the reaction trans-aconitate + S-adenosyl-L-methionine = (E)-3-(methoxycarbonyl)pent-2-enedioate + S-adenosyl-L-homocysteine. In terms of biological role, catalyzes the S-adenosylmethionine monomethyl esterification of trans-aconitate. This Paracidovorax citrulli (strain AAC00-1) (Acidovorax citrulli) protein is Trans-aconitate 2-methyltransferase.